Reading from the N-terminus, the 131-residue chain is MRHRMKRHKLGRYGSHRRSLLRNLSREIVEHGSIVTTTAKAKALKTFMDKLVSKAIEAATTEDRARSVHLRRQINAVLGDRRLTNKLVDEIAKNYVGRRGGYVRVLRIGFRRGDAAEMSLVQLVEASSQEG.

It belongs to the bacterial ribosomal protein bL17 family. Part of the 50S ribosomal subunit. Contacts protein L32.

This chain is Large ribosomal subunit protein bL17, found in Thermotoga neapolitana (strain ATCC 49049 / DSM 4359 / NBRC 107923 / NS-E).